The following is a 928-amino-acid chain: Isoleucine--tRNA ligase (928 aa).

Residues 57 to 67 (PFANGNIHMGH) carry the 'HIGH' region motif. An L-isoleucyl-5'-AMP-binding site is contributed by Glu552. A 'KMSKS' region motif is present at residues 593 to 597 (KMSKS). Lys596 is a binding site for ATP. Residues Cys887, Cys890, Cys907, and Cys910 each contribute to the Zn(2+) site.

This sequence belongs to the class-I aminoacyl-tRNA synthetase family. IleS type 1 subfamily. As to quaternary structure, monomer. It depends on Zn(2+) as a cofactor.

It is found in the cytoplasm. It carries out the reaction tRNA(Ile) + L-isoleucine + ATP = L-isoleucyl-tRNA(Ile) + AMP + diphosphate. Functionally, catalyzes the attachment of isoleucine to tRNA(Ile). As IleRS can inadvertently accommodate and process structurally similar amino acids such as valine, to avoid such errors it has two additional distinct tRNA(Ile)-dependent editing activities. One activity is designated as 'pretransfer' editing and involves the hydrolysis of activated Val-AMP. The other activity is designated 'posttransfer' editing and involves deacylation of mischarged Val-tRNA(Ile). The chain is Isoleucine--tRNA ligase from Lacticaseibacillus casei (strain BL23) (Lactobacillus casei).